Here is a 132-residue protein sequence, read N- to C-terminus: Agouti-signaling protein (132 aa).

The signal sequence occupies residues 1–22 (MDVTRLLLATLLVFLCFFTAYS). Asparagine 39 carries an N-linked (GlcNAc...) asparagine glycan. The span at 61 to 79 (EISRKEAEKKRSSKKEASM) shows a compositional bias: basic and acidic residues. Residues 61–87 (EISRKEAEKKRSSKKEASMKKVARPRT) form a disordered region. Intrachain disulfides connect cysteine 93/cysteine 108, cysteine 100/cysteine 114, cysteine 107/cysteine 125, cysteine 111/cysteine 132, and cysteine 116/cysteine 123. One can recognise an Agouti domain in the interval 93–132 (CVATRDSCKPPAPACCDPCASCQCRFFRSACSCRVLSLNC).

It localises to the secreted. Its function is as follows. Involved in the regulation of melanogenesis. The binding of ASP to MC1R precludes alpha-MSH initiated signaling and thus blocks production of cAMP, leading to a down-regulation of eumelanogenesis (brown/black pigment) and thus increasing synthesis of pheomelanin (yellow/red pigment). The sequence is that of Agouti-signaling protein (ASIP) from Macaca fascicularis (Crab-eating macaque).